Reading from the N-terminus, the 311-residue chain is Aspartate carbamoyltransferase catalytic subunit (311 aa).

Residues arginine 55 and threonine 56 each contribute to the carbamoyl phosphate site. Residue lysine 85 coordinates L-aspartate. 3 residues coordinate carbamoyl phosphate: arginine 106, histidine 135, and glutamine 138. L-aspartate contacts are provided by arginine 168 and arginine 230. Positions 268 and 269 each coordinate carbamoyl phosphate.

Belongs to the aspartate/ornithine carbamoyltransferase superfamily. ATCase family. In terms of assembly, heterododecamer (2C3:3R2) of six catalytic PyrB chains organized as two trimers (C3), and six regulatory PyrI chains organized as three dimers (R2).

The enzyme catalyses carbamoyl phosphate + L-aspartate = N-carbamoyl-L-aspartate + phosphate + H(+). It participates in pyrimidine metabolism; UMP biosynthesis via de novo pathway; (S)-dihydroorotate from bicarbonate: step 2/3. Functionally, catalyzes the condensation of carbamoyl phosphate and aspartate to form carbamoyl aspartate and inorganic phosphate, the committed step in the de novo pyrimidine nucleotide biosynthesis pathway. The protein is Aspartate carbamoyltransferase catalytic subunit of Yersinia pseudotuberculosis serotype IB (strain PB1/+).